Consider the following 427-residue polypeptide: Ribosomal protein uS12 methylthiotransferase RimO (427 aa).

The MTTase N-terminal domain maps to 1–116 (MNFYVEVLGC…IATHIGKRNV (116 aa)). [4Fe-4S] cluster is bound by residues cysteine 10, cysteine 46, cysteine 79, cysteine 145, cysteine 149, and cysteine 152. The 230-residue stretch at 131-360 (VDNGQYAYVK…MDIQSQISFE (230 aa)) folds into the Radical SAM core domain. A TRAM domain is found at 363–426 (EKLVGKKLKV…IYDLEGEIVE (64 aa)).

It belongs to the methylthiotransferase family. RimO subfamily. [4Fe-4S] cluster is required as a cofactor.

It is found in the cytoplasm. It carries out the reaction L-aspartate(89)-[ribosomal protein uS12]-hydrogen + (sulfur carrier)-SH + AH2 + 2 S-adenosyl-L-methionine = 3-methylsulfanyl-L-aspartate(89)-[ribosomal protein uS12]-hydrogen + (sulfur carrier)-H + 5'-deoxyadenosine + L-methionine + A + S-adenosyl-L-homocysteine + 2 H(+). Catalyzes the methylthiolation of an aspartic acid residue of ribosomal protein uS12. The chain is Ribosomal protein uS12 methylthiotransferase RimO from Thermosipho melanesiensis (strain DSM 12029 / CIP 104789 / BI429).